A 159-amino-acid chain; its full sequence is Cyclic pyranopterin monophosphate synthase (159 aa).

Substrate is bound by residues 75-77 (LCH) and 113-114 (ME). Asp-128 is a catalytic residue.

It belongs to the MoaC family. Homohexamer; trimer of dimers.

It catalyses the reaction (8S)-3',8-cyclo-7,8-dihydroguanosine 5'-triphosphate = cyclic pyranopterin phosphate + diphosphate. The protein operates within cofactor biosynthesis; molybdopterin biosynthesis. Its function is as follows. Catalyzes the conversion of (8S)-3',8-cyclo-7,8-dihydroguanosine 5'-triphosphate to cyclic pyranopterin monophosphate (cPMP). The chain is Cyclic pyranopterin monophosphate synthase from Aliivibrio salmonicida (strain LFI1238) (Vibrio salmonicida (strain LFI1238)).